We begin with the raw amino-acid sequence, 399 residues long: Ribose-phosphate pyrophosphokinase 2, chloroplastic (399 aa).

The N-terminal 32 residues, 1–32, are a transit peptide targeting the chloroplast; it reads MAAKAAALSSSPFVSSRRLSSPAASLRARTPR. Residues Asp214, His216, Asp225, and Asp229 each contribute to the Mg(2+) site. Positions 299–314 are binding of phosphoribosylpyrophosphate; that stretch reads GKVAIMVDDMIDTAGT.

This sequence belongs to the ribose-phosphate pyrophosphokinase family. Mg(2+) serves as cofactor.

It is found in the plastid. The protein localises to the chloroplast. The enzyme catalyses D-ribose 5-phosphate + ATP = 5-phospho-alpha-D-ribose 1-diphosphate + AMP + H(+). This is Ribose-phosphate pyrophosphokinase 2, chloroplastic from Oryza sativa subsp. japonica (Rice).